The sequence spans 375 residues: Probable sugar phosphate/phosphate translocator At3g17430 (375 aa).

10 helical membrane-spanning segments follow: residues 9–29 (LVLTYIYLLIYIILSSGVILY), 43–63 (LPITLTMIHMGFAGFVAFLLI), 76–96 (FEIYATCVVPISAFFASSLWF), 106–126 (VAFIQMLKALMPVATFIMAVV), 140–160 (MLLVSVGVVISSYGEIHFNIV), 163–183 (VYQVTGIFAEALRLVLTQVLL), 193–213 (ITSLYYIAPCSFVFLALPWYV), 229–249 (WIFFSNALCALALNFSIFLVI), 257–276 (IRVAGVLKDWILIALSTVIF), and 280–302 (TITGLNITGYAIALCGVVMYNYI). The disordered stretch occupies residues 328–348 (EKKSSDKFNPNDSVEIPRVGG).

It belongs to the TPT transporter family. TPT (TC 2.A.7.9) subfamily.

It is found in the membrane. This chain is Probable sugar phosphate/phosphate translocator At3g17430, found in Arabidopsis thaliana (Mouse-ear cress).